The following is a 345-amino-acid chain: GMP reductase 1 (345 aa).

Residues 26–27 (SR), Lys-78, 129–131 (DVA), and 180–181 (VG) each bind NADP(+). K(+)-binding residues include Gly-181, Gly-183, and Cys-186. The active-site Thioimidate intermediate is the Cys-186. Thr-188 acts as the Proton donor/acceptor in catalysis. Arg-189 lines the K(+) pocket. GMP-binding positions include 219–221 (DGG), 242–243 (GG), 268–270 (GMS), and 286–290 (RASEG). NADP(+) contacts are provided by residues Met-269, 285–286 (YR), and 314–317 (STCT).

This sequence belongs to the IMPDH/GMPR family. GuaC type 1 subfamily. As to quaternary structure, homotetramer.

It carries out the reaction IMP + NH4(+) + NADP(+) = GMP + NADPH + 2 H(+). In terms of biological role, catalyzes the irreversible NADPH-dependent deamination of GMP to IMP. It functions in the conversion of nucleobase, nucleoside and nucleotide derivatives of G to A nucleotides, and in maintaining the intracellular balance of A and G nucleotides. This chain is GMP reductase 1 (GMPR), found in Homo sapiens (Human).